Reading from the N-terminus, the 302-residue chain is Acetaldehyde dehydrogenase (302 aa).

The active-site Acyl-thioester intermediate is the Cys131. NAD(+) is bound by residues 162 to 170 (SAGPGTRKN) and Asn273.

Belongs to the acetaldehyde dehydrogenase family.

It catalyses the reaction acetaldehyde + NAD(+) + CoA = acetyl-CoA + NADH + H(+). This Acidovorax sp. (strain JS42) protein is Acetaldehyde dehydrogenase.